The chain runs to 262 residues: ATP synthase subunit a (262 aa).

6 consecutive transmembrane segments (helical) span residues 32-52 (IAFT…AVFV), 98-118 (LFMF…VLGI), 127-147 (FTIT…VGFW), 153-173 (FFSL…IFPI), 189-209 (LFVA…FVID), and 219-239 (LLVG…EILV).

The protein belongs to the ATPase A chain family. In terms of assembly, F-type ATPases have 2 components, CF(1) - the catalytic core - and CF(0) - the membrane proton channel. CF(1) has five subunits: alpha(3), beta(3), gamma(1), delta(1), epsilon(1). CF(0) has four main subunits: a, b, b' and c.

Its subcellular location is the cell inner membrane. Functionally, key component of the proton channel; it plays a direct role in the translocation of protons across the membrane. The polypeptide is ATP synthase subunit a (Erythrobacter litoralis (strain HTCC2594)).